The chain runs to 398 residues: Argininosuccinate synthase (398 aa).

An ATP-binding site is contributed by 9-17; that stretch reads AYSGGLDTS. Y85 provides a ligand contact to L-citrulline. Residue G115 participates in ATP binding. The L-aspartate site is built by T117, N121, and D122. N121 is a binding site for L-citrulline. L-citrulline contacts are provided by R125, S173, E258, and Y270.

Belongs to the argininosuccinate synthase family. Type 1 subfamily. In terms of assembly, homotetramer.

It localises to the cytoplasm. The enzyme catalyses L-citrulline + L-aspartate + ATP = 2-(N(omega)-L-arginino)succinate + AMP + diphosphate + H(+). It functions in the pathway amino-acid biosynthesis; L-arginine biosynthesis; L-arginine from L-ornithine and carbamoyl phosphate: step 2/3. This is Argininosuccinate synthase from Streptococcus pneumoniae (strain Hungary19A-6).